A 341-amino-acid chain; its full sequence is HTH-type transcriptional repressor PurR (341 aa).

The HTH lacI-type domain occupies 2-56; sequence ATIKDVAKHAGVSTTTVSHVINKTRFVAENTKAAVWAAIKELHYSPSAVARSLKV. The H-T-H motif DNA-binding region spans 4–23; that stretch reads IKDVAKHAGVSTTTVSHVIN. Residues 48–56 mediate DNA binding; sequence SAVARSLKV. Hypoxanthine is bound by residues Y73, R190, T192, F221, and D275.

As to quaternary structure, homodimer.

It functions in the pathway purine metabolism; purine nucleotide biosynthesis [regulation]. Functionally, is the main repressor of the genes involved in the de novo synthesis of purine nucleotides, regulating purB, purC, purEK, purF, purHD, purL, purMN and guaBA expression. PurR is allosterically activated to bind its cognate DNA by binding the purine corepressors, hypoxanthine or guanine, thereby effecting transcription repression. The sequence is that of HTH-type transcriptional repressor PurR from Yersinia pseudotuberculosis serotype O:1b (strain IP 31758).